The chain runs to 107 residues: uncharacterized protein (107 aa).

Residues 1 to 14 show a composition bias toward polar residues; the sequence is MTERNASGRMNTKG. Residues 1–20 form a disordered region; sequence MTERNASGRMNTKGRSIKET.

It is found in the mitochondrion. This is an uncharacterized protein from Arabidopsis thaliana (Mouse-ear cress).